The chain runs to 315 residues: MSESLRIIFAGTPDFAARHLDALLSSGHNVVGVFTQPDRPAGRGKKLMPSPVKVLAEEKGLPVFQPVSLRPQENQQLVADLQADVMVVVAYGLILPKAVLEMPRLGCINVHGSLLPRWRGAAPIQRSLWAGDAETGVTIMQMDVGLDTGDMLYKLSCPITAEDTSGTLYDKLAELGPQGLITTLKQLADGTAKPEVQDETLVTYAEKLSKEEARIDWSLSAAQLERCIRAFNPWPMSWVEIEGQPVKVWKASVIDTATNAAPGTILEANKQGIQVATGDGILNLLSLQPAGKKAMSAQDLLNSRREWFVPGNRLV.

Residues 2 to 189 form an N-terminal domain region; it reads SESLRIIFAG…LITTLKQLAD (188 aa). 113-116 contributes to the (6S)-5,6,7,8-tetrahydrofolate binding site; sequence SLLP. The interval 210–315 is C-terminal domain; that stretch reads KEEARIDWSL…EWFVPGNRLV (106 aa).

The protein belongs to the Fmt family.

The enzyme catalyses L-methionyl-tRNA(fMet) + (6R)-10-formyltetrahydrofolate = N-formyl-L-methionyl-tRNA(fMet) + (6S)-5,6,7,8-tetrahydrofolate + H(+). Attaches a formyl group to the free amino group of methionyl-tRNA(fMet). The formyl group appears to play a dual role in the initiator identity of N-formylmethionyl-tRNA by promoting its recognition by IF2 and preventing the misappropriation of this tRNA by the elongation apparatus. The chain is Methionyl-tRNA formyltransferase from Escherichia coli O157:H7.